We begin with the raw amino-acid sequence, 623 residues long: uncharacterized protein (623 aa).

A compositionally biased stretch (basic and acidic residues) spans 157–166 (LNESPLRDQQ). Residues 157-237 (LNESPLRDQQ…QGLPDHNNSI (81 aa)) are disordered. Polar residues predominate over residues 167–177 (ESSTPSKNSTL). The span at 193 to 210 (AFRPLPSPSRRSSQSAPA) shows a compositional bias: low complexity.

This is an uncharacterized protein from Macaca fascicularis (Crab-eating macaque).